Consider the following 397-residue polypeptide: Probable tRNA sulfurtransferase (397 aa).

The THUMP domain occupies 60 to 165 (HPVIEKLQEV…KEGTYITAYD (106 aa)). ATP contacts are provided by residues 183-184 (ML), 208-209 (HF), Arg-265, Gly-287, and Gln-296.

Belongs to the ThiI family.

It is found in the cytoplasm. The enzyme catalyses [ThiI sulfur-carrier protein]-S-sulfanyl-L-cysteine + a uridine in tRNA + 2 reduced [2Fe-2S]-[ferredoxin] + ATP + H(+) = [ThiI sulfur-carrier protein]-L-cysteine + a 4-thiouridine in tRNA + 2 oxidized [2Fe-2S]-[ferredoxin] + AMP + diphosphate. It carries out the reaction [ThiS sulfur-carrier protein]-C-terminal Gly-Gly-AMP + S-sulfanyl-L-cysteinyl-[cysteine desulfurase] + AH2 = [ThiS sulfur-carrier protein]-C-terminal-Gly-aminoethanethioate + L-cysteinyl-[cysteine desulfurase] + A + AMP + 2 H(+). Its pathway is cofactor biosynthesis; thiamine diphosphate biosynthesis. Catalyzes the ATP-dependent transfer of a sulfur to tRNA to produce 4-thiouridine in position 8 of tRNAs, which functions as a near-UV photosensor. Also catalyzes the transfer of sulfur to the sulfur carrier protein ThiS, forming ThiS-thiocarboxylate. This is a step in the synthesis of thiazole, in the thiamine biosynthesis pathway. The sulfur is donated as persulfide by IscS. The protein is Probable tRNA sulfurtransferase of Anoxybacillus flavithermus (strain DSM 21510 / WK1).